We begin with the raw amino-acid sequence, 120 residues long: Large ribosomal subunit protein bL12 (120 aa).

This sequence belongs to the bacterial ribosomal protein bL12 family. Homodimer. Part of the ribosomal stalk of the 50S ribosomal subunit. Forms a multimeric L10(L12)X complex, where L10 forms an elongated spine to which 2 to 4 L12 dimers bind in a sequential fashion. Binds GTP-bound translation factors.

Forms part of the ribosomal stalk which helps the ribosome interact with GTP-bound translation factors. Is thus essential for accurate translation. This is Large ribosomal subunit protein bL12 from Listeria monocytogenes serotype 4b (strain CLIP80459).